Reading from the N-terminus, the 137-residue chain is Large ribosomal subunit protein uL16 (137 aa).

Belongs to the universal ribosomal protein uL16 family. Part of the 50S ribosomal subunit.

Binds 23S rRNA and is also seen to make contacts with the A and possibly P site tRNAs. This Pseudomonas syringae pv. tomato (strain ATCC BAA-871 / DC3000) protein is Large ribosomal subunit protein uL16.